The primary structure comprises 241 residues: Enterotoxin type H (241 aa).

The first 24 residues, 1 to 24, serve as a signal peptide directing secretion; it reads MINKIKILFSFLALLLSFTSYAKA. Residues cysteine 106 and cysteine 116 are joined by a disulfide bond. Aspartate 191, histidine 230, and aspartate 232 together coordinate Zn(2+).

It belongs to the staphylococcal/streptococcal toxin family. As to quaternary structure, interacts with host MHC class II molecules composed of alpha/HLA-DRA and beta/HLA-DRB1 chains. Interacts with host TCR alpha-chain TRAV27. Zn(2+) serves as cofactor.

The protein resides in the secreted. Functionally, staphylococcal enterotoxin that activates the host immune system by binding as unprocessed molecules to major histocompatibility (MHC) complex class II and T-cell receptor (TCR) molecules via their alpha domain, in particular TRAV27. In turn, this ternary complex activates a large number of T-lymphocytes initiating a systemic release of pro-inflammatory cytokines. Also causes the intoxication staphylococcal food poisoning syndrome. The illness characterized by high fever, hypotension, diarrhea, shock, and in some cases death. The protein is Enterotoxin type H (entH) of Staphylococcus aureus.